We begin with the raw amino-acid sequence, 139 residues long: Flagellar basal body rod protein FlgB (139 aa).

The protein belongs to the flagella basal body rod proteins family. As to quaternary structure, the basal body constitutes a major portion of the flagellar organelle and consists of a number of rings mounted on a central rod. In Gram-negative bacteria, at least four rings, L, P, S and M are present, whereas Gram-positive bacteria lack the L and P rings. The rod consists of about 26 subunits of FlgG in the distal portion, and FlgB, FlgC and FlgF build up the proximal portion of the rod with about 6 subunits each. Rod assembly occurs by export via the flagellum-specific pathway of its constituent proteins and by their incorporation into the rod structure in the probable order of FlgB, FlgC, FlgF and FlgG. Another protein, FliE, also assembles onto the stable rod structure.

The protein resides in the bacterial flagellum basal body. Its function is as follows. Structural component of flagellum, the bacterial motility apparatus. Part of the rod structure of flagellar basal body. The chain is Flagellar basal body rod protein FlgB from Proteus mirabilis.